Here is a 183-residue protein sequence, read N- to C-terminus: MDPSQNPNIVHATTIISVRRGGHVAVAGDGQVTLGHTVMKGNARKVRRLGREGQVLAGFAGAAADAFTLFELFEAKLDKHGQLTRAAVELAKDWRTERRLGKLEALLAVADKETSLIISGTGDVVEPEDGIIAIGSGGSYALSAARALLAHTQLDAKTIAAEAINIAGDICIYTNRNVVVEEL.

Thr-13 is a catalytic residue. Positions 168, 171, and 174 each coordinate Na(+).

It belongs to the peptidase T1B family. HslV subfamily. In terms of assembly, a double ring-shaped homohexamer of HslV is capped on each side by a ring-shaped HslU homohexamer. The assembly of the HslU/HslV complex is dependent on binding of ATP.

The protein resides in the cytoplasm. The enzyme catalyses ATP-dependent cleavage of peptide bonds with broad specificity.. Its activity is regulated as follows. Allosterically activated by HslU binding. Protease subunit of a proteasome-like degradation complex believed to be a general protein degrading machinery. The sequence is that of ATP-dependent protease subunit HslV from Xanthomonas axonopodis pv. citri (strain 306).